The chain runs to 1241 residues: Anion exchange protein 2 (1241 aa).

The tract at residues 1-240 is disordered; the sequence is MSSAPRRPAK…RSYNLQERRR (240 aa). Residues 1–707 are Cytoplasmic-facing; sequence MSSAPRRPAK…SDFRDALDPQ (707 aa). Composition is skewed to basic and acidic residues over residues 37–49 and 58–75; these read ELHRTLGVERFEE and GGEEPGRSYGEEDFEYHR. Composition is skewed to basic residues over residues 76–85 and 94–110; these read QSSHHIHHPL and RRRKTPQGPGRKPRRRP. Phosphoserine is present on residues Ser113, Ser132, Ser144, Ser170, Ser172, and Ser173. Residues 120–133 are compositionally biased toward acidic residues; that stretch reads TIEEGEEDEDEASE. Positions 141 to 155 are enriched in low complexity; that stretch reads TQPSPVSTPSSVQFF. Phosphothreonine is present on Thr183. Over residues 189–209 the composition is skewed to low complexity; that stretch reads GAQAGTQVEEAEAEAVAVASG. The span at 210–219 shows a compositional bias: gly residues; sequence TAGGDDGGAS. Residue Ser243 is modified to Phosphoserine. At Thr257 the chain carries Phosphothreonine. Lys274 carries the N6-methyllysine modification. The interval 288–320 is disordered; sequence LVRKNAKGSTQSGREGREPGPTPRARPRAPHKP. A Phosphoserine modification is found at Ser443. Residues 449–471 form a disordered region; sequence SLLGHHHGQGAESDPHVTEPLMG. 4 consecutive transmembrane segments (helical) span residues 708–731, 737–774, 784–816, and 826–847; these read CLAAVIFIYFAALSPAITFGGLLG, LIGVSELIMSTALQGVVFCLLGAQPLLVIGFSGPLLVF, SNHLEYLVGRVWIGFWLVFLALLMVALEGSFLV, and IFAFLISLIFIYETFYKLVKIF. The membrane (anion exchange) stretch occupies residues 708–1241; sequence CLAAVIFIYF…DEYNEMPMPV (534 aa). The Extracellular portion of the chain corresponds to 848-900; that stretch reads QEHPLHGCSASNSSEVDGGENMTWAGARPTLGPGNRSLAGQSGQGKPRGQPNT. N-linked (GlcNAc...) asparagine glycosylation is found at Asn859, Asn868, and Asn882. Residues 901-918 traverse the membrane as a helical segment; sequence ALLSLVLMAGTFFIAFFL. At 919–933 the chain is on the cytoplasmic side; the sequence is RKFKNSRFFPGRIRR. 5 helical membrane passes run 934–954, 988–1010, 1036–1059, 1091–1136, and 1163–1199; these read VIGDFGVPIAILIMVLVDYSI, PFPVWMMVASLLPAILVFILIFM, LLLIVAMGGICALFGLPWLAAATV, VTGL…IQFY, and MHLFTALQLLCLALLWAVMSTAASLAFPFILILTVPL. A lipid anchor (S-palmitoyl cysteine) is attached at Cys1173.

This sequence belongs to the anion exchanger (TC 2.A.31) family. As to expression, expressed in the liver, stomach, kidney, prostate, thyroid and rectum. In terms of tissue distribution, expressed in the liver and kidney.

The protein resides in the apical cell membrane. Its subcellular location is the basolateral cell membrane. It catalyses the reaction hydrogencarbonate(in) + chloride(out) = hydrogencarbonate(out) + chloride(in). Functionally, sodium-independent anion exchanger which mediates the electroneutral exchange of chloride for bicarbonate ions across the cell membrane. Plays an important role in osteoclast differentiation and function. Regulates bone resorption and calpain-dependent actin cytoskeleton organization in osteoclasts via anion exchange-dependent control of pH. Essential for intracellular pH regulation in CD8(+) T-cells upon CD3 stimulation, modulating CD8(+) T-cell responses. The protein is Anion exchange protein 2 (SLC4A2) of Homo sapiens (Human).